A 404-amino-acid polypeptide reads, in one-letter code: Ubiquitin-like modifier-activating enzyme 5 (404 aa).

S45 is modified (phosphoserine). The ATP site is built by G83, D104, K127, N150, and N184. Residues C226 and C229 each contribute to the Zn(2+) site. Residue C250 is the Glycyl thioester intermediate of the active site. Positions 303 and 308 each coordinate Zn(2+). The short motif at 334-346 (IIHEDNEWGIELV) is the UFM1-interacting sequence (UIS) element. The segment at 347 to 377 (SEVSEEELKNSSGPVPDLPEGITVAYTIPKK) is linker. Phosphoserine is present on residues S358 and S393. Residues 389 to 404 (DSGESLEDLMAKMKNM) carry the UFC1-binding sequence (UFC) motif.

It belongs to the ubiquitin-activating E1 family. UBA5 subfamily. As to quaternary structure, homodimer; homodimerization is required for UFM1 activation. Interacts (via UIS motif) with UFM1; binds UFM1 via a trans-binding mechanism in which UFM1 interacts with distinct sites in both subunits of the UBA5 homodimer. Interacts (via C-terminus) with UFC1. Interacts (via UIS motif) with GABARAPL2 and, with lower affinity, with GABARAP and GABARAPL1.

The protein resides in the cytoplasm. The protein localises to the nucleus. It is found in the endoplasmic reticulum membrane. It localises to the golgi apparatus. Its function is as follows. E1-like enzyme which specifically catalyzes the first step in ufmylation. Activates UFM1 by first adenylating its C-terminal glycine residue with ATP, and thereafter linking this residue to the side chain of a cysteine residue in E1, yielding a UFM1-E1 thioester and free AMP. Activates UFM1 via a trans-binding mechanism, in which UFM1 interacts with distinct sites in both subunits of the UBA5 homodimer. Trans-binding also promotes stabilization of the UBA5 homodimer, and enhances ATP-binding. Transfer of UFM1 from UBA5 to the E2-like enzyme UFC1 also takes place using a trans mechanism. Ufmylation plays a key role in various processes, such as ribosome recycling, response to DNA damage, interferon response or reticulophagy (also called ER-phagy). Ufmylation is essential for erythroid differentiation of both megakaryocytes and erythrocytes. This Pongo abelii (Sumatran orangutan) protein is Ubiquitin-like modifier-activating enzyme 5.